The chain runs to 568 residues: 2-succinyl-5-enolpyruvyl-6-hydroxy-3-cyclohexene-1-carboxylate synthase (568 aa).

The protein belongs to the TPP enzyme family. MenD subfamily. As to quaternary structure, homodimer. Requires Mg(2+) as cofactor. The cofactor is Mn(2+). Thiamine diphosphate serves as cofactor.

It carries out the reaction isochorismate + 2-oxoglutarate + H(+) = 5-enolpyruvoyl-6-hydroxy-2-succinyl-cyclohex-3-ene-1-carboxylate + CO2. It participates in quinol/quinone metabolism; 1,4-dihydroxy-2-naphthoate biosynthesis; 1,4-dihydroxy-2-naphthoate from chorismate: step 2/7. It functions in the pathway quinol/quinone metabolism; menaquinone biosynthesis. In terms of biological role, catalyzes the thiamine diphosphate-dependent decarboxylation of 2-oxoglutarate and the subsequent addition of the resulting succinic semialdehyde-thiamine pyrophosphate anion to isochorismate to yield 2-succinyl-5-enolpyruvyl-6-hydroxy-3-cyclohexene-1-carboxylate (SEPHCHC). This chain is 2-succinyl-5-enolpyruvyl-6-hydroxy-3-cyclohexene-1-carboxylate synthase, found in Mannheimia succiniciproducens (strain KCTC 0769BP / MBEL55E).